Reading from the N-terminus, the 375-residue chain is Outer membrane porin C (375 aa).

The signal sequence occupies residues 1–21; sequence MKVKVLSLLVPALLVAGAANA. Topologically, residues 22–33 are periplasmic; it reads AEVYNKDGNKLD. A beta stranded transmembrane segment spans residues 34–42; it reads LYGKVDGLH. Over 43–53 the chain is Extracellular; it reads YFSDDKSVDGD. A beta stranded transmembrane segment spans residues 54-63; it reads QTYMRLGFKG. At 64–73 the chain is on the periplasmic side; that stretch reads ETQVTDQLTG. The beta stranded transmembrane segment at 74-84 threads the bilayer; it reads YGQWEYQIQGN. Residues 85-91 lie on the Extracellular side of the membrane; sequence APESENN. The chain crosses the membrane as a beta stranded span at residues 92–101; sequence SWTRVAFAGL. The Periplasmic segment spans residues 102 to 106; it reads KFQDI. The beta stranded transmembrane segment at 107 to 115 threads the bilayer; that stretch reads GSFDYGRNY. The Extracellular portion of the chain corresponds to 116–141; it reads GVVYDVTSWTDVLPEFGGDTYGSDNF. Residues 142-154 traverse the membrane as a beta stranded segment; sequence MQQRGNGFATYRN. Residues 155-163 are Periplasmic-facing; it reads TDFFGLVDG. A beta stranded transmembrane segment spans residues 164–171; sequence LNFAVQYQ. The Extracellular portion of the chain corresponds to 172–204; sequence GQNGSVSGENDPDFTGHGITNNGRKALRQNGDG. The beta stranded transmembrane segment at 205-211 threads the bilayer; it reads VGGSITY. The Periplasmic portion of the chain corresponds to 212 to 215; the sequence is DYEG. A beta stranded membrane pass occupies residues 216–223; sequence FGVGAAVS. Residues 224–245 lie on the Extracellular side of the membrane; it reads SSKRTDAQNTAAYIGNGDRAET. A beta stranded transmembrane segment spans residues 246-252; that stretch reads YTGGLKY. The Periplasmic portion of the chain corresponds to 253–256; it reads DANN. The chain crosses the membrane as a beta stranded span at residues 257 to 264; it reads IYLAAQYT. At 265 to 273 the chain is on the extracellular side; sequence QTYNATRVG. Residues 274–290 traverse the membrane as a beta stranded segment; it reads SLGWANKAQNFEAVAQY. Residues 291–295 are Periplasmic-facing; sequence QFDFG. A beta stranded transmembrane segment spans residues 296-303; that stretch reads LRPSVAYL. Over 304–326 the chain is Extracellular; sequence QSKGKNLGTIGTRNYDDEDILKY. The beta stranded transmembrane segment at 327–334 threads the bilayer; it reads VDVGATYY. Residues 335–338 are Periplasmic-facing; the sequence is FNKN. Residues 339-346 form a beta stranded membrane-spanning segment; that stretch reads MSTYVDYK. Residues 347-366 lie on the Extracellular side of the membrane; it reads INLLDDNQFTRDAGINTDNI. Residues 367-374 traverse the membrane as a beta stranded segment; it reads VALGLVYQ. Position 375 (Phe375) is a topological domain, periplasmic.

It belongs to the Gram-negative porin family. Homotrimer. Forms mixed heterotrimers with OmpF; other mixed heterotrimers are also probable.

The protein localises to the cell outer membrane. Functionally, forms pores that allow passive diffusion of small molecules across the outer membrane. (Microbial infection) Supports colicin E5 entry in the absence of its major receptor OmpF. In terms of biological role, (Microbial infection) A mixed OmpC-OmpF heterotrimer is the outer membrane receptor for toxin CdiA-EC536. This Escherichia coli O6:K15:H31 (strain 536 / UPEC) protein is Outer membrane porin C (ompC).